Reading from the N-terminus, the 482-residue chain is NAD(+) hydrolase ThsA (482 aa).

Positions 3-281 (EHEQKIMIDR…EEITKRFRCK (279 aa)) constitute a Deacetylase sirtuin-type domain. Positions 112 and 150 each coordinate NAD(+). The active-site Proton acceptor is the His150. Residues 282–482 (NVFLSGSAHE…SKIHDVIKLI (201 aa)) form an SLOG (STALD) domain region. 3'cADPR contacts are provided by Gly287, Ser288, Leu324, Phe355, Arg373, Lys390, Gly407, and Glu411.

The protein belongs to the soluble Thoeris ThsA family. In terms of assembly, homotetramer in solution.

It catalyses the reaction NAD(+) + H2O = ADP-D-ribose + nicotinamide + H(+). In vivo probably activated by a cyclic ADP-D-ribose generated by ThsB (might be 3'cADPR). In terms of biological role, NAD(+) hydrolyzing component (NADase) of the Thoeris antiviral defense system, composed of ThsA and ThsB (maybe J591_1492). As purified, has NADase activity that is not activated by any tested cADPR isomers; binds 3'cADPR better than 2'cADPR. It was suggested the purified protein is already in a fully active state. Upon activation binds and hydrolyzes NAD(+), leading to cell death and inhibition of phage replication. The protein is NAD(+) hydrolase ThsA of Acinetobacter baumannii (strain 532279).